The following is a 340-amino-acid chain: uncharacterized protein (340 aa).

It localises to the virion. This is an uncharacterized protein from Acanthamoeba polyphaga (Amoeba).